A 109-amino-acid polypeptide reads, in one-letter code: Cytochrome c (109 aa).

Heme c-binding residues include Cys25, Cys28, His29, and Met88.

The protein belongs to the cytochrome c family. In terms of processing, binds 1 heme c group covalently per subunit.

It is found in the mitochondrion intermembrane space. Functionally, electron carrier protein. The oxidized form of the cytochrome c heme group can accept an electron from the heme group of the cytochrome c1 subunit of cytochrome reductase. Cytochrome c then transfers this electron to the cytochrome oxidase complex, the final protein carrier in the mitochondrial electron-transport chain. The protein is Cytochrome c of Tetrahymena pyriformis.